Reading from the N-terminus, the 443-residue chain is Xaa-Pro dipeptidase (443 aa).

Mn(2+) contacts are provided by Asp-241, Asp-252, His-333, Glu-378, and Glu-417.

The protein belongs to the peptidase M24B family. Bacterial-type prolidase subfamily. Requires Mn(2+) as cofactor.

The catalysed reaction is Xaa-L-Pro dipeptide + H2O = an L-alpha-amino acid + L-proline. Splits dipeptides with a prolyl residue in the C-terminal position. The sequence is that of Xaa-Pro dipeptidase from Actinobacillus pleuropneumoniae serotype 5b (strain L20).